Reading from the N-terminus, the 1198-residue chain is MDEETRHSLECIQANQIFPRKQLIREDENLQVPFLELHGESTEFVGRAEDAIIALSNYRLHIKFKESLVNVPLQLIESVECRDIFQLHLTCKDCKVIRCQFSTFEQCQEWLKRLNNAIRPPAKIEDLFSFAYHAWCMEVYASEKEQHGDLCRPGEHVTSRFKNEVERMGFDMNNAWRISNINEKYKLCGSYPQELIVPAWITDKELESVSSFRSWKRIPAVIYRHQSNGAVIARCGQPEVSWWGWRNADDEHLVQSVAKACASDSRSSGSKLSTRNTSRDFPNGGDLSDVEFDSSLSNASGAESLAIQPQKLLILDARSYAAAVANRAKGGGCECPEYYPNCEVVFMGMANIHSIRRSFQSLRLLCTQMPDPGNWLSALESTKWLHHLSVLLKSALLVVHAVDQDQRPVLVHCSDGWDRTPQIVALAKLLLDPYYRTIEGFQVLVEMEWLDFGHKFADRCGHGENSDDLNERCPVFLQWLDCVHQLQRQFPCSFEFNEAFLVKLVQHTYSCLFGTFLCNNAKERGEKHTQERTCSVWSLLRAGNKAFKNLLYSSQSEAVLYPVCHVRNLMLWSAVYLPCPSPTTPVDDSCAPYPAPGTSPDDPPLSRLPKTRSYDNLTTACDNTVPLASRRCSDPSLNEKWQEHRRSLELSSLAGPGEDPLSADSLGKPTRVPGGAELSVAAGVAEGQMENILQEATKEESGVEEPAHRAGIEIQEGKEDPLLEKESRRKTPEASAIGLHQDPELGDAALRSHLDMSWPLFSQGISEQQSGLSVLLSSLQVPPRGEDSLEVPVEQFRIEEIAEGREEAVLPIPVDAKVGYGTSQSCSLLPSQVPFETRGPNVDSSTDMLVEDKVKSVSGPQGHHRSCLVNSGKDRLPQTMEPSPSETSLVERPQVGSVVHRTSLGSTLSLTRSPCALPLAECKEGLVCNGAPETENRASEQPPGLSTLQMYPTPNGHCANGEAGRSKDSLSRQLSAMSCSSAHLHSRNLHHKWLHSHSGRPSATSSPDQPSRSHLDDDGMSVYTDTIQQRLRQIESGHQQEVETLKKQVQELKSRLESQYLTSSLHFNGDFGDEVTSIPDSESNLDQNCLSRCSTEIFSEASWEQVDKQDTEMTRWLPDHLAAHCYACDSAFWLASRKHHCRNCGNVFCSSCCNQKVPVPSQQLFEPSRVCKSCYSSLHPTSSSIDLELDKPIAATSN.

S8 is subject to Phosphoserine. Residues 155-576 enclose the Myotubularin phosphatase domain; the sequence is EHVTSRFKNE…RNLMLWSAVY (422 aa). Residues 265–280 are compositionally biased toward polar residues; that stretch reads SRSSGSKLSTRNTSRD. The tract at residues 265–285 is disordered; that stretch reads SRSSGSKLSTRNTSRDFPNGG. A 1,2-diacyl-sn-glycero-3-phospho-(1D-myo-inositol-3,5-bisphosphate) is bound by residues N326, N351, and I352. Residues N326, N351, and I352 each contribute to the a 1,2-diacyl-sn-glycero-3-phospho-(1D-myo-inositol-3-phosphate) site. The Phosphocysteine intermediate role is filled by C413. Residues S414, D415, G416, W417, D418, R419, K455, and R459 each coordinate a 1,2-diacyl-sn-glycero-3-phospho-(1D-myo-inositol-3,5-bisphosphate). A 1,2-diacyl-sn-glycero-3-phospho-(1D-myo-inositol-3-phosphate) contacts are provided by S414, D415, G416, W417, D418, and R419. R459 lines the a 1,2-diacyl-sn-glycero-3-phospho-(1D-myo-inositol-3-phosphate) pocket. Positions 590-612 are disordered; sequence CAPYPAPGTSPDDPPLSRLPKTR. The segment covering 593 to 603 has biased composition (pro residues); that stretch reads YPAPGTSPDDP. Residues S613, S633, S647, and S651 each carry the phosphoserine modification. Disordered regions lie at residues 650–669, 716–735, and 855–891; these read LSSLAGPGEDPLSADSLGKP, EGKEDPLLEKESRRKTPEAS, and KSVSGPQGHHRSCLVNSGKDRLPQTMEPSPSETSLVE. Positions 716–732 are enriched in basic and acidic residues; that stretch reads EGKEDPLLEKESRRKTP. T731 bears the Phosphothreonine mark. S906 and S909 each carry phosphoserine. Disordered regions lie at residues 933 to 974 and 993 to 1019; these read ETEN…SRQL and WLHSHSGRPSATSSPDQPSRSHLDDDG. Residues 999-1010 are compositionally biased toward polar residues; sequence GRPSATSSPDQP. Residues 1029–1062 are a coiled coil; that stretch reads QRLRQIESGHQQEVETLKKQVQELKSRLESQYLT. Position 1064 is a phosphoserine (S1064). An FYVE-type zinc finger spans residues 1119–1179; the sequence is DHLAAHCYAC…VCKSCYSSLH (61 aa). Zn(2+) contacts are provided by C1125, C1128, C1141, C1144, C1149, C1152, C1171, and C1174.

This sequence belongs to the protein-tyrosine phosphatase family. Non-receptor class myotubularin subfamily. In terms of assembly, forms heterodimers with MTMR4 that recruit both CEP55 and PLK1; occurs during early mitosis, regulates the phosphorylation of CEP55 by PLK1 and its recruitment to the midbody where it mediates cell abscission. In terms of processing, phosphorylated by CDK1 during mitosis.

It is found in the cytoplasm. It localises to the cytosol. Its subcellular location is the membrane. It catalyses the reaction a 1,2-diacyl-sn-glycero-3-phospho-(1D-myo-inositol-3,5-bisphosphate) + H2O = a 1,2-diacyl-sn-glycero-3-phospho-(1D-myo-inositol-5-phosphate) + phosphate. The catalysed reaction is a 1,2-diacyl-sn-glycero-3-phospho-(1D-myo-inositol-3-phosphate) + H2O = a 1,2-diacyl-sn-glycero-3-phospho-(1D-myo-inositol) + phosphate. It carries out the reaction 1,2-dihexadecanoyl-sn-glycero-3-phospho-(1D-myo-inositol-3-phosphate) + H2O = 1,2-dihexadecanoyl-sn-glycero-3-phospho-(1D-myo-inositol) + phosphate. The enzyme catalyses 1,2-dioctanoyl-sn-glycero-3-phospho-(1-D-myo-inositol-3-phosphate) + H2O = 1,2-dioctanoyl-sn-glycero-3-phospho-(1D-myo-inositol) + phosphate. It catalyses the reaction 1,2-dihexadecanoyl-sn-glycero-3-phospho-(1D-myo-inositol-3,5-phosphate) + H2O = 1,2-dihexadecanoyl-sn-glycero-3-phospho-(1D-myo-inositol-5-phosphate) + phosphate. In terms of biological role, lipid phosphatase that specifically dephosphorylates the D-3 position of phosphatidylinositol 3-phosphate and phosphatidylinositol 3,5-bisphosphate, generating phosphatidylinositol and phosphatidylinositol 5-phosphate. Decreases the levels of phosphatidylinositol 3-phosphate, a phospholipid found in cell membranes where it acts as key regulator of both cell signaling and intracellular membrane traffic. Could also have a molecular sequestering/adapter activity and regulate biological processes independently of its phosphatase activity. It includes the regulation of midbody abscission during mitotic cytokinesis. This Homo sapiens (Human) protein is Phosphatidylinositol-3,5-bisphosphate 3-phosphatase MTMR3.